Consider the following 59-residue polypeptide: Small integral membrane protein 30 (59 aa).

The first 24 residues, 1 to 24, serve as a signal peptide directing secretion; the sequence is MTSVSTQLSLVLMSLLLVLPVVEA. The Extracellular portion of the chain corresponds to 25–29; sequence VEAGD. A helical membrane pass occupies residues 30-50; it reads AIALLLGVVLSITGICACLGV. Over 51 to 59 the chain is Cytoplasmic; sequence YARKRNGQM.

As to quaternary structure, interacts (via transmembrane domain) with antiviral protein MAVS (via transmembrane domain); the interaction disrupts MAVS interaction with RIGI and inhibits MAVS aggregation, resulting in the repression of type I interferon signaling and innate immune responses.

It is found in the endoplasmic reticulum membrane. It localises to the mitochondrion membrane. In terms of biological role, negatively regulates antiviral innate immune responses. Disrupts the interaction of antiviral protein MAVS with innate immune receptor RIGI and inhibits MAVS aggregation, resulting in the repression of type I interferon signaling and innate immune responses. This Homo sapiens (Human) protein is Small integral membrane protein 30.